A 247-amino-acid chain; its full sequence is UDP-2,3-diacylglucosamine hydrolase (247 aa).

5 residues coordinate Mn(2+): D8, H10, D41, N79, and H115. Residue 79-80 (NH) participates in substrate binding. The substrate site is built by D123, K165, K168, and H196. Residues H196 and H198 each contribute to the Mn(2+) site.

It belongs to the LpxH family. The cofactor is Mn(2+).

It is found in the cell inner membrane. It carries out the reaction UDP-2-N,3-O-bis[(3R)-3-hydroxytetradecanoyl]-alpha-D-glucosamine + H2O = 2-N,3-O-bis[(3R)-3-hydroxytetradecanoyl]-alpha-D-glucosaminyl 1-phosphate + UMP + 2 H(+). The protein operates within glycolipid biosynthesis; lipid IV(A) biosynthesis; lipid IV(A) from (3R)-3-hydroxytetradecanoyl-[acyl-carrier-protein] and UDP-N-acetyl-alpha-D-glucosamine: step 4/6. Its function is as follows. Hydrolyzes the pyrophosphate bond of UDP-2,3-diacylglucosamine to yield 2,3-diacylglucosamine 1-phosphate (lipid X) and UMP by catalyzing the attack of water at the alpha-P atom. Involved in the biosynthesis of lipid A, a phosphorylated glycolipid that anchors the lipopolysaccharide to the outer membrane of the cell. This is UDP-2,3-diacylglucosamine hydrolase from Blochmanniella floridana.